A 483-amino-acid polypeptide reads, in one-letter code: NADH-quinone oxidoreductase subunit N (483 aa).

13 helical membrane passes run 9–29, 35–55, 69–89, 104–124, 158–178, 201–221, 234–254, 272–292, 297–317, 325–345, 368–388, 404–424, and 449–469; these read LVLPEVILGVSALVLLVWGAF, PLFTGAAVLALLGAAVAAVVG, AAATYAKVAIYLSSAVAIVLG, AVLVILAAVGMGVTASAGDLI, FVLGALSSGLLLYGASLIYGF, VGLLFGLVFLICGLAFKVSAA, APTSVVGFFAAAPKLAAMMMF, VLIIASLASVFVGAFAGLAQT, LWAYSSIANVGYALLGVATGG, LLFMTLYMVDVTGFFACLQAL, IAVAMTAFSLSALGMPPFSGF, VLLQWAAVLGLVGSVVAAFYY, and AVGFAAALFSFPVVMVALIWL.

It belongs to the complex I subunit 2 family. NDH-1 is composed of 14 different subunits. Subunits NuoA, H, J, K, L, M, N constitute the membrane sector of the complex.

Its subcellular location is the cell inner membrane. The catalysed reaction is a quinone + NADH + 5 H(+)(in) = a quinol + NAD(+) + 4 H(+)(out). NDH-1 shuttles electrons from NADH, via FMN and iron-sulfur (Fe-S) centers, to quinones in the respiratory chain. The immediate electron acceptor for the enzyme in this species is believed to be ubiquinone. Couples the redox reaction to proton translocation (for every two electrons transferred, four hydrogen ions are translocated across the cytoplasmic membrane), and thus conserves the redox energy in a proton gradient. This chain is NADH-quinone oxidoreductase subunit N, found in Caulobacter sp. (strain K31).